The chain runs to 165 residues: Sporulation-specific cell division protein SsgB (165 aa).

A disordered region spans residues 1–21; it reads MLVGNSWTRSLEPVSGHEHTE.

It belongs to the SsgA family. As to quaternary structure, interacts with SsgA. Interacts with FtsZ (via N-terminus).

It localises to the cell septum. In terms of biological role, involved in sporulation-specific cell division. Required for early stages of sporulation. Important in the process of growth cessation prior to sporulation-specific cell division. Recruits cell division protein FtsZ to the future septum sites and tethers the contractile ring structure (Z ring) to the cytoplasmic membrane during sporulation. Stimulates polymerization and filament length of FtsZ in vitro. The protein is Sporulation-specific cell division protein SsgB of Kineococcus radiotolerans (strain ATCC BAA-149 / DSM 14245 / SRS30216).